Consider the following 130-residue polypeptide: Small ribosomal subunit protein uS9 (130 aa).

It belongs to the universal ribosomal protein uS9 family.

The chain is Small ribosomal subunit protein uS9 from Phytoplasma australiense.